A 332-amino-acid polypeptide reads, in one-letter code: Ribosomal RNA small subunit methyltransferase C (332 aa).

It belongs to the methyltransferase superfamily. RsmC family. In terms of assembly, monomer.

It localises to the cytoplasm. It carries out the reaction guanosine(1207) in 16S rRNA + S-adenosyl-L-methionine = N(2)-methylguanosine(1207) in 16S rRNA + S-adenosyl-L-homocysteine + H(+). Functionally, specifically methylates the guanine in position 1207 of 16S rRNA in the 30S particle. This Pseudomonas putida (strain GB-1) protein is Ribosomal RNA small subunit methyltransferase C.